Consider the following 354-residue polypeptide: Opsin-5 (354 aa).

Topologically, residues 1-33 (MALNHTALPQDERLPHYLRDGDPFASKLSWEAD) are extracellular. N-linked (GlcNAc...) asparagine glycosylation is present at N4. A helical membrane pass occupies residues 34 to 54 (LVAGFYLTIIGILSTFGNGYV). Residues 55 to 74 (LYMSSRRKKKLRPAEIMTIN) are Cytoplasmic-facing. The helical transmembrane segment at 75–95 (LAVCDLGISVVGKPFTIISCF) threads the bilayer. The Extracellular segment spans residues 96-108 (CHRWVFGWIGCRW). C106 and C183 form a disulfide bridge. A helical membrane pass occupies residues 109 to 129 (YGWAGFFFGCGSLITMTAVSL). Residues 130 to 150 (DRYLKICYLSYGVWLKRKHAY) are Cytoplasmic-facing. Residues 151-171 (ICLAAIWAYASFWTTMPLVGL) form a helical membrane-spanning segment. Over 172-197 (GDYVPEPFGTSCTLDWWLAQASVGGQ) the chain is Extracellular. The chain crosses the membrane as a helical span at residues 198 to 218 (VFILNILFFCLLLPTAVIVFS). Over 219–252 (YVKIIAKVKSSSKEVAHFDSRIHSSHVLEMKLTK) the chain is Cytoplasmic. Residues 253 to 273 (VAMLICAGFLIAWIPYAVVSV) form a helical membrane-spanning segment. Over 274–288 (WSAFGRPDSIPIQLS) the chain is Extracellular. Residues 289-309 (VVPTLLAKSAAMYNPIIYQVI) traverse the membrane as a helical segment. N6-(retinylidene)lysine is present on K296. The Cytoplasmic portion of the chain corresponds to 310–353 (DYKFACCQTGGLKATKKKSLEGFRLHTVTTVRKSSAVLEIHEEW). S-palmitoyl cysteine attachment occurs at residues C315 and C316.

Belongs to the G-protein coupled receptor 1 family. Opsin subfamily. In terms of processing, it is uncertain whether Cys-315 or Cys-316 is palmitoylated. Detected in brain and retina and cell lines derived from neural retina.

It localises to the cell membrane. In terms of biological role, G-protein coupled receptor which selectively activates G(i) type G proteins via ultraviolet A (UVA) light-mediated activation in the retina. Preferentially binds the chromophore 11-cis retinal and is a bistable protein that displays emission peaks at 380 nm (UVA light) and 470 nm (blue light). Required for the light-response in the inner plexiform layer, and contributes to the regulation of the light-response in the nerve fiber layer, via phosphorylated DAT/SLC6A3 dopamine uptake. Involved in local corneal and retinal circadian rhythm photoentrainment via modulation of the UVA light-induced phase-shift of the retina clock. Acts as a circadian photoreceptor in the outer ear, via modulation of circadian clock-gene expression in response to violet light during the light-to-dark transition phase and night phase of the circadian cycle. Required in the retina to negatively regulate hyaloid vessel regression during postnatal development via light-dependent OPN5-SLC32A1-DRD2-VEGFR2 signaling. Involved in the light-dependent regulation of retina and vitreous compartment dopamine levels. The sequence is that of Opsin-5 (OPN5) from Homo sapiens (Human).